We begin with the raw amino-acid sequence, 408 residues long: LIN1-like protein (408 aa).

Residues 1-161 (MKRTLRNPGN…SVPSSPKRMS (161 aa)) form a disordered region. Over residues 41-52 (YYESESEEDEDQ) the composition is skewed to acidic residues. Basic and acidic residues-rich tracts occupy residues 53 to 62 (ILNKEKKEGQ), 73 to 109 (DEKRTLPNDEAQKRRDFIENGDAERLAHKGLRNKEVL), and 119 to 129 (NGKYSKLRYED). One can recognise a GYF domain in the interval 344-402 (SSQYNFKWEFDDKTYGPYTASQIQAWSNEGYFTDAKHAAFIQLANMDEWMYPNNICFCD).

The protein belongs to the LIN1 family.

This is LIN1-like protein from Schizosaccharomyces pombe (strain 972 / ATCC 24843) (Fission yeast).